The following is a 1004-amino-acid chain: NADH:acrylate oxidoreductase (1004 aa).

An FMN phosphoryl threonine modification is found at Thr-455. FAD-binding residues include Ala-508, Glu-527, Asn-535, Thr-536, Gly-540, Gly-541, and Asp-775. Arg-834 acts as the Proton donor in catalysis. 4 residues coordinate FAD: His-941, Glu-970, Ala-985, and Leu-986.

Belongs to the FAD-dependent oxidoreductase 2 family. FRD/SDH subfamily. It depends on FAD as a cofactor. Requires FMN as cofactor. Post-translationally, is flavinylated on Thr-455 by ApbE, encoded in a neighboring gene. Flavinylation is essential for catalytic activity.

It catalyses the reaction acrylate + NADH + H(+) = propanoate + NAD(+). Catalyzes the NADH-dependent reduction of acrylate to propanoate. The principal role of ARD in Vibrio seems to be the energy-saving detoxification of acrylate coming from the environment. May also use acrylate as the terminal electron acceptor for NADH regeneration at oxygen deficiency. NADPH cannot replace NADH as the electron donor. Is also able to reduce methacrylate in vitro, but with a much lower efficiency. This is NADH:acrylate oxidoreductase from Vibrio harveyi (Beneckea harveyi).